Here is a 129-residue protein sequence, read N- to C-terminus: Small ribosomal subunit protein uS11 (129 aa).

Belongs to the universal ribosomal protein uS11 family. Part of the 30S ribosomal subunit. Interacts with proteins S7 and S18. Binds to IF-3.

In terms of biological role, located on the platform of the 30S subunit, it bridges several disparate RNA helices of the 16S rRNA. Forms part of the Shine-Dalgarno cleft in the 70S ribosome. The chain is Small ribosomal subunit protein uS11 from Psychromonas ingrahamii (strain DSM 17664 / CCUG 51855 / 37).